The following is a 419-amino-acid chain: Probable pectate lyase C (419 aa).

Positions 1–19 are cleaved as a signal peptide; the sequence is MRLGIALFSLIGLCHSVSA. N48, N164, and N201 each carry an N-linked (GlcNAc...) asparagine glycan. R204 is a catalytic residue. In terms of domain architecture, EF-hand spans 261-296; sequence NEYFHGYVETNYYDPDRDGTLNGNELGVSASNYGGM. The Ca(2+) site is built by D274, D276, D278, T280, and E285. The interval 350–395 is disordered; that stretch reads ELISDEASMGGPGDLDGGSPPTDSDGDGIPDDAETEIGSDPNTADS. Residues 373–386 are compositionally biased toward acidic residues; that stretch reads SDGDGIPDDAETEI.

It belongs to the polysaccharide lyase 1 family. The cofactor is Ca(2+).

The protein localises to the secreted. The enzyme catalyses Eliminative cleavage of (1-&gt;4)-alpha-D-galacturonan to give oligosaccharides with 4-deoxy-alpha-D-galact-4-enuronosyl groups at their non-reducing ends.. Functionally, pectinolytic enzyme consist of four classes of enzymes: pectin lyase, polygalacturonase, pectin methylesterase and rhamnogalacturonase. Among pectinolytic enzymes, pectin lyase is the most important in depolymerization of pectin, since it cleaves internal glycosidic bonds of highly methylated pectins. Favors pectate, the anion, over pectin, the methyl ester. This is Probable pectate lyase C (plyC) from Aspergillus terreus (strain NIH 2624 / FGSC A1156).